Consider the following 136-residue polypeptide: Small ribosomal subunit protein uS8 (136 aa).

This sequence belongs to the universal ribosomal protein uS8 family. Part of the 30S ribosomal subunit. Contacts proteins S5 and S12.

Its function is as follows. One of the primary rRNA binding proteins, it binds directly to 16S rRNA central domain where it helps coordinate assembly of the platform of the 30S subunit. The chain is Small ribosomal subunit protein uS8 from Frankia alni (strain DSM 45986 / CECT 9034 / ACN14a).